The following is a 118-amino-acid chain: MARIAGVNIPDHKHVVIALTAIYGIGKTTSLKLCKTVDIDPSVKVSQLSDAQLESLRTEIAKITVEGDLRRVVTMNIKRLMDLGCYRGLRHRRGLPLRGQRTKTNARTRKGRRKGTSS.

The interval 94-118 is disordered; it reads GLPLRGQRTKTNARTRKGRRKGTSS.

The protein belongs to the universal ribosomal protein uS13 family. Part of the 30S ribosomal subunit. Forms a loose heterodimer with protein S19. Forms two bridges to the 50S subunit in the 70S ribosome.

Functionally, located at the top of the head of the 30S subunit, it contacts several helices of the 16S rRNA. In the 70S ribosome it contacts the 23S rRNA (bridge B1a) and protein L5 of the 50S subunit (bridge B1b), connecting the 2 subunits; these bridges are implicated in subunit movement. Contacts the tRNAs in the A and P-sites. In Legionella pneumophila (strain Paris), this protein is Small ribosomal subunit protein uS13.